The sequence spans 408 residues: L,D-transpeptidase 2 (408 aa).

Residues 1–34 (MPKVGIAAQAGRTRVRRAWLTALMMTAVMIGAVA) form the signal peptide. C35 carries the N-palmitoyl cysteine lipid modification. Residue C35 is the site of S-diacylglycerol cysteine attachment. Residues D232, E235, and G236 each contribute to the Ca(2+) site. One can recognise a L,D-TPase catalytic domain in the interval 253-378 (VIATADDNTK…VKRGDIVEVV (126 aa)). Residues Y318 and 331–332 (SG) each bind substrate. The active-site Proton donor/acceptor is the H336. Catalysis depends on C354, which acts as the Nucleophile. N356 contributes to the substrate binding site.

As to quaternary structure, monomer.

The protein resides in the cell membrane. Its pathway is cell wall biogenesis; peptidoglycan biosynthesis. Its activity is regulated as follows. Is irreversibly inactivated by the beta-lactams carbapenems via the formation of a covalent adduct resulting from acylation of the catalytic Cys. In terms of biological role, generates 3-&gt;3 cross-links in peptidoglycan, catalyzing the cleavage of the mDap(3)-D-Ala(4) bond of a tetrapeptide donor stem and the formation of a bond between the carbonyl of mDap(3) of the donor stem and the side chain of mDap(3) of the acceptor stem. Is specific for donor substrates containing a stem tetrapeptide since it cannot use pentapeptide stems. Is essential for virulence in a mouse model of acute infection. This is L,D-transpeptidase 2 (ldtB) from Mycobacterium tuberculosis (strain CDC 1551 / Oshkosh).